Reading from the N-terminus, the 65-residue chain is MKVKMKTKRGAAKRFKKTANGFKRKQAFKRHILTKKSPKRIRQLRGTKLVHVADVAAVRRMCPYI.

This sequence belongs to the bacterial ribosomal protein bL35 family.

The polypeptide is Large ribosomal subunit protein bL35 (Psychrobacter sp. (strain PRwf-1)).